The primary structure comprises 360 residues: G-protein coupled receptor 15 (360 aa).

Residues 1 to 33 (MDPEETSVYLDYYYATSPNPDIRETHSHVPYTS) lie on the Extracellular side of the membrane. Residues 34–54 (VFLPVFYTAVFLTGVLGNLVL) traverse the membrane as a helical segment. The Cytoplasmic portion of the chain corresponds to 55-69 (MGALHFKPGSRRLID). The chain crosses the membrane as a helical span at residues 70-90 (IFIINLAASDFIFLVTLPLWV). Topologically, residues 91-120 (DKEASLGLWRTGSFLCKGSSYMISVNMHCS) are extracellular. Residues 121–141 (VFLLTCMSVDRYLAIVCPVVS) form a helical membrane-spanning segment. Residues 142–149 (RKFRRTDC) are Cytoplasmic-facing. Residues 150-170 (AYVVCASIWFISCLLGLPTLL) form a helical membrane-spanning segment. The Extracellular segment spans residues 171–192 (SRELTLIDDKPYCAEKKATPLK). The helical transmembrane segment at 193 to 213 (LIWSLVALIFTFFVPLLSIVT) threads the bilayer. At 214–239 (CYCCIARKLCAHYQQSGKHNKKLKKS) the chain is on the cytoplasmic side. Residues 240 to 260 (IKIIFIVVAAFLVSWLPFNTF) form a helical membrane-spanning segment. The Extracellular portion of the chain corresponds to 261–284 (KLLAIVSGLQQERYFPSAMLQLGM). A helical membrane pass occupies residues 285–305 (EVSGPLAFANSCVNPFIYYIF). Topologically, residues 306 to 360 (DSYIRRAIVHCLCPCLKNYDFGSSTETSDSHLTKALSTFIHAEDFTRRRKRSVSL) are cytoplasmic. Ser359 is modified (phosphoserine).

The protein belongs to the G-protein coupled receptor 1 family. Interacts with adapter YWHAE; this interaction promotes ER-to-Golgi transport of GPR15. In terms of processing, phosphorylation is necessary for YWHAE binding and efficient surface expression. O-glycosylated. Sialylated O-glycans in the N-terminal tail inhibits binding of GPR15LG. Post-translationally, sulfation is required for efficient binding of GPR15LG.

The protein localises to the cell membrane. G protein-coupled receptor that plays an important role in immune homeostasis. Acts via its natural ligand GPR15LG, a chemokine-like polypeptide strongly expressed in gastrointestinal tissues. GPR15-GPR15LG signaling axis regulates intestinal homeostasis and inflammation through the migration of immune cells. Controls thereby the specific homing of T-cells, particularly FOXP3+ regulatory T-cells (Tregs), to the large intestine lamina propria. Also required for skin localization of thymus-derived dendritic epidermal T-cells. Plays an important role in mediating cytoprotective function as well as angiogenesis of thrombomodulin. Mechanistically, preferentially signals through the Gi/o pathway to inhibit adenylate cyclase activity and activate a phosphatidylinositol-calcium second messenger system that regulates the release of Ca(2+) ions from intracellular stores. The chain is G-protein coupled receptor 15 (GPR15) from Macaca mulatta (Rhesus macaque).